A 297-amino-acid polypeptide reads, in one-letter code: ATP phosphoribosyltransferase (297 aa).

It belongs to the ATP phosphoribosyltransferase family.

The protein resides in the cytoplasm. It catalyses the reaction 1-(5-phospho-beta-D-ribosyl)-ATP + diphosphate = 5-phospho-alpha-D-ribose 1-diphosphate + ATP. It participates in amino-acid biosynthesis; L-histidine biosynthesis; L-histidine from 5-phospho-alpha-D-ribose 1-diphosphate: step 1/9. Functionally, catalyzes the condensation of ATP and 5-phosphoribose 1-diphosphate to form N'-(5'-phosphoribosyl)-ATP (PR-ATP). Has a crucial role in the pathway because the rate of histidine biosynthesis seems to be controlled primarily by regulation of the enzymatic activity. The sequence is that of ATP phosphoribosyltransferase (HIS1) from Eremothecium gossypii (strain ATCC 10895 / CBS 109.51 / FGSC 9923 / NRRL Y-1056) (Yeast).